Reading from the N-terminus, the 103-residue chain is MVSWTITSGLLRQVKRYCVEYFSCFSSKYIIYLCFSFFQTETMQTYQYHVAKFAETHYDNLDKYVCVPDSWIRRRRKTKQKVSVVYFEGNRSRTKKRIKSNDN.

This is an uncharacterized protein from Microplitis demolitor (Parasitoid wasp).